The primary structure comprises 302 residues: Bacteriochlorophyll synthase 33 kDa chain (302 aa).

9 helical membrane-spanning segments follow: residues 25 to 45 (ITWF…GIWP), 49 to 69 (WPLV…MSQA), 97 to 117 (WGLY…WMLG), 119 to 139 (WGFG…VEPI), 145 to 165 (GWWG…FTGA), 166 to 186 (AVLS…LYAF), 223 to 243 (LACT…VIWG), 246 to 266 (IHAG…RVLL), and 275 to 295 (WYNG…AFAI).

The protein resides in the cell membrane. It functions in the pathway porphyrin-containing compound metabolism; bacteriochlorophyll biosynthesis (light-independent). In terms of biological role, catalyzes the esterification of bacteriochlorophyllide a by geranylgeraniol-PPi. The chain is Bacteriochlorophyll synthase 33 kDa chain (bchG) from Cereibacter sphaeroides (strain ATCC 17023 / DSM 158 / JCM 6121 / CCUG 31486 / LMG 2827 / NBRC 12203 / NCIMB 8253 / ATH 2.4.1.) (Rhodobacter sphaeroides).